Here is a 572-residue protein sequence, read N- to C-terminus: Mitochondrial distribution and morphology protein 34 (572 aa).

The 195-residue stretch at 1–195 (MAFNFNWSPL…LPAIIHRLSL (195 aa)) folds into the SMP-LTD domain. 4 disordered regions span residues 212–236 (TASANGEGPGQDPLASPPQDPVDAL), 355–426 (GAGR…PDND), 487–507 (HGASVLEKGKQDPDSSAGSSR), and 552–572 (ACGPFWDRHSQEESPPPAYGH). The segment covering 358-370 (RHSKAHARKRKKR) has biased composition (basic residues). Residues 371-381 (VVDLRRPKTTD) are compositionally biased toward basic and acidic residues. Residues 387–400 (SDESSFTESTSAPS) show a composition bias toward polar residues.

The protein belongs to the MDM34 family. Component of the ER-mitochondria encounter structure (ERMES) or MDM complex, composed of mmm1, mdm10, mdm12 and mdm34.

Its subcellular location is the mitochondrion outer membrane. In terms of biological role, component of the ERMES/MDM complex, which serves as a molecular tether to connect the endoplasmic reticulum (ER) and mitochondria. Components of this complex are involved in the control of mitochondrial shape and protein biogenesis, and function in nonvesicular lipid trafficking between the ER and mitochondria. Mdm34 is required for the interaction of the ER-resident membrane protein mmm1 and the outer mitochondrial membrane-resident beta-barrel protein mdm10. This is Mitochondrial distribution and morphology protein 34 from Aspergillus fumigatus (strain ATCC MYA-4609 / CBS 101355 / FGSC A1100 / Af293) (Neosartorya fumigata).